Here is a 53-residue protein sequence, read N- to C-terminus: UPF0391 membrane protein GFO_1615 (53 aa).

2 helical membrane-spanning segments follow: residues Leu4–Ala24 and Ala27–Leu47.

The protein belongs to the UPF0391 family.

The protein localises to the cell membrane. This chain is UPF0391 membrane protein GFO_1615, found in Christiangramia forsetii (strain DSM 17595 / CGMCC 1.15422 / KT0803) (Gramella forsetii).